A 330-amino-acid chain; its full sequence is Type II restriction enzyme Cfr9I (330 aa).

It belongs to the XcyI type II restriction endonuclease family. It depends on Mg(2+) as a cofactor.

The enzyme catalyses Endonucleolytic cleavage of DNA to give specific double-stranded fragments with terminal 5'-phosphates.. In terms of biological role, an E and P subtype restriction enzyme that recognizes the double-stranded sequence 5'-CCCGGG-3' and cleaves after C-1. The protein is Type II restriction enzyme Cfr9I (cfr9IR) of Citrobacter freundii.